A 692-amino-acid chain; its full sequence is DNA ligase (692 aa).

NAD(+)-binding positions include 35-39 (DLVYD), 88-89 (SL), and E117. Catalysis depends on K119, which acts as the N6-AMP-lysine intermediate. NAD(+) contacts are provided by R140, E176, K301, and K325. C416, C419, C434, and C439 together coordinate Zn(2+). The region spanning 611-692 (LTNQSNSWAS…FDLIKNSKKT (82 aa)) is the BRCT domain.

Belongs to the NAD-dependent DNA ligase family. LigA subfamily. Requires Mg(2+) as cofactor. The cofactor is Mn(2+).

The catalysed reaction is NAD(+) + (deoxyribonucleotide)n-3'-hydroxyl + 5'-phospho-(deoxyribonucleotide)m = (deoxyribonucleotide)n+m + AMP + beta-nicotinamide D-nucleotide.. DNA ligase that catalyzes the formation of phosphodiester linkages between 5'-phosphoryl and 3'-hydroxyl groups in double-stranded DNA using NAD as a coenzyme and as the energy source for the reaction. It is essential for DNA replication and repair of damaged DNA. This Mesomycoplasma hyopneumoniae (strain 232) (Mycoplasma hyopneumoniae) protein is DNA ligase.